The following is a 222-amino-acid chain: Cytochrome b6 (222 aa).

A helical membrane pass occupies residues 39–59; sequence IFYCLGGITLVCFIIQFATGF. Residue cysteine 42 coordinates heme c. The heme b site is built by histidine 93 and histidine 107. Transmembrane regions (helical) follow at residues 97–117, 123–143, and 193–213; these read ASMM…TGGF, LTWI…VTGY, and LHTF…FLMI. Positions 194 and 209 each coordinate heme b.

This sequence belongs to the cytochrome b family. PetB subfamily. As to quaternary structure, the 4 large subunits of the cytochrome b6-f complex are cytochrome b6, subunit IV (17 kDa polypeptide, PetD), cytochrome f and the Rieske protein, while the 4 small subunits are PetG, PetL, PetM and PetN. The complex functions as a dimer. Requires heme b as cofactor. Heme c serves as cofactor.

Its subcellular location is the cellular thylakoid membrane. Its function is as follows. Component of the cytochrome b6-f complex, which mediates electron transfer between photosystem II (PSII) and photosystem I (PSI), cyclic electron flow around PSI, and state transitions. The polypeptide is Cytochrome b6 (Prochlorothrix hollandica).